Reading from the N-terminus, the 561-residue chain is Potassium-transporting ATPase potassium-binding subunit (561 aa).

Helical transmembrane passes span 4–24 (IVMQDVFFVVLLLVLAVPLGI), 65–85 (AVSVLAFSAVGFVFVMAVLML), 133–153 (IGLTVQNFVSAATGIAVLFAV), 177–197 (LYILLPLSLVLALLLVSQGVV), 253–273 (FTNLIEMLAILLIPVALVVMF), 285–305 (AIMTAMMIVFVIGVVAITISE), 380–400 (GLYGMIGFIILTVFIAGLLVG), 417–437 (MVCLLILVPPLLTLFGTAVAV), 484–504 (MVGAVMMLLARFIPLVAALYL), and 528–548 (FIGLLIGVVVLVGALSFLPAL).

This sequence belongs to the KdpA family. The system is composed of three essential subunits: KdpA, KdpB and KdpC.

The protein resides in the cell membrane. Part of the high-affinity ATP-driven potassium transport (or Kdp) system, which catalyzes the hydrolysis of ATP coupled with the electrogenic transport of potassium into the cytoplasm. This subunit binds the extracellular potassium ions and delivers the ions to the membrane domain of KdpB through an intramembrane tunnel. This Listeria monocytogenes serotype 4a (strain HCC23) protein is Potassium-transporting ATPase potassium-binding subunit.